We begin with the raw amino-acid sequence, 167 residues long: Phosphopantetheine adenylyltransferase (167 aa).

Thr10 lines the substrate pocket. ATP contacts are provided by residues 10–11 and His18; that span reads TF. Substrate is bound by residues Ala77 and Arg91. Residues 92–94, Glu102, and 127–133 each bind ATP; these read GLR and YSFISSS.

This sequence belongs to the bacterial CoaD family. As to quaternary structure, homohexamer. It depends on Mg(2+) as a cofactor.

It is found in the cytoplasm. It carries out the reaction (R)-4'-phosphopantetheine + ATP + H(+) = 3'-dephospho-CoA + diphosphate. Its pathway is cofactor biosynthesis; coenzyme A biosynthesis; CoA from (R)-pantothenate: step 4/5. Its function is as follows. Reversibly transfers an adenylyl group from ATP to 4'-phosphopantetheine, yielding dephospho-CoA (dPCoA) and pyrophosphate. This Thermomicrobium roseum (strain ATCC 27502 / DSM 5159 / P-2) protein is Phosphopantetheine adenylyltransferase.